Reading from the N-terminus, the 375-residue chain is ATP-sensitive inward rectifier potassium channel 15 (375 aa).

Residues 1–60 (MDAIHIGMSSTPLVKHTAGAGLKANRPRVMSKSGHSNVRIDKVDGIYLLYLQDLWTTVID) are Cytoplasmic-facing. Residues 61 to 87 (MKWRYKLTLFAATFVMTWFLFGVIYYA) traverse the membrane as a helical segment. At 88–113 (IAFIHGDLEPGEPISNHTPCIMKVDS) the chain is on the extracellular side. The segment at residues 114–130 (LTGAFLFSLESQTTIGY) is an intramembrane region (helical; Pore-forming). The Selectivity filter motif lies at 127-132 (TIGYGV). Topologically, residues 131 to 139 (GVRSITEEC) are extracellular. The chain crosses the membrane as a helical span at residues 140–165 (PHAIFLLVAQLVITTLIEIFITGTFL). At 166–375 (AKIARPKKRA…RTLLLQQSNV (210 aa)) the chain is on the cytoplasmic side.

This sequence belongs to the inward rectifier-type potassium channel (TC 1.A.2.1) family. KCNJ15 subfamily. In terms of assembly, can form heteromultimeric channels with Kir5.1/KCNJ16. Interacts with PATJ.

It is found in the membrane. Its subcellular location is the cell membrane. The catalysed reaction is K(+)(in) = K(+)(out). With respect to regulation, channel activity is regulated by variations of cytosolic pH; reversibly inhibited by acidic pH values. Inhibited by Ba(2+) and Cs(+) in a voltage-dependent manner. In terms of biological role, inward rectifier potassium channels are characterized by a greater tendency to allow potassium to flow into the cell rather than out of it. Their voltage dependence is regulated by the concentration of extracellular potassium; as external potassium is raised, the voltage range of the channel opening shifts to more positive voltages. The inward rectification is mainly due to the blockage of outward current by internal magnesium. The sequence is that of ATP-sensitive inward rectifier potassium channel 15 (KCNJ15) from Homo sapiens (Human).